A 311-amino-acid chain; its full sequence is Eukaryotic translation initiation factor 3 subunit E (311 aa).

Residues 100-280 (VYYNYPKGRD…MGVKSVSIHE (181 aa)) enclose the PCI domain.

The protein belongs to the eIF-3 subunit E family. Component of the eukaryotic translation initiation factor 3 (eIF-3) complex.

It is found in the cytoplasm. Functionally, component of the eukaryotic translation initiation factor 3 (eIF-3) complex, which is involved in protein synthesis of a specialized repertoire of mRNAs and, together with other initiation factors, stimulates binding of mRNA and methionyl-tRNAi to the 40S ribosome. The eIF-3 complex specifically targets and initiates translation of a subset of mRNAs involved in cell proliferation. The chain is Eukaryotic translation initiation factor 3 subunit E from Caenorhabditis briggsae.